We begin with the raw amino-acid sequence, 408 residues long: Indian hedgehog protein (408 aa).

The N-terminal stretch at 1-23 (MKPARLLLLLSGCALLLAPAVRC) is a signal peptide. Cys24 carries N-palmitoyl cysteine lipidation. 7 residues coordinate Ca(2+): Glu90, Glu91, Asp96, Thr126, Glu127, Asp130, and Asp132. Zn(2+)-binding residues include His141, Asp148, and His183. Gly198 carries Cholesterol glycine ester lipidation.

This sequence belongs to the hedgehog family. In terms of assembly, multimer. As to quaternary structure, interacts with BOC and CDON. Interacts with PTCH1. Interacts with glypican GPC3. Post-translationally, cholesterylation is required for N-product targeting to lipid rafts and multimerization. The C-terminal domain displays an autoproteolysis activity and a cholesterol transferase activity. Both activities result in the cleavage of the full-length protein and covalent attachment of a cholesterol moiety to the C-terminal of the newly generated N-product. The N-product is the active species in both local and long-range signaling, whereas the C-product is degraded in the endoplasmic reticulum. In terms of processing, N-palmitoylation by HHAT of N-product is required for indian hedgehog protein N-product multimerization and full activity. As to expression, expressed in developing midgut, lung and cartilage of developing long bones in the limb.

It is found in the cell membrane. The protein localises to the endoplasmic reticulum membrane. Its subcellular location is the golgi apparatus membrane. It localises to the secreted. It carries out the reaction glycyl-L-cysteinyl-[protein] + cholesterol + H(+) = [protein]-C-terminal glycyl cholesterol ester + N-terminal L-cysteinyl-[protein]. Its function is as follows. Plays a role in embryonic morphogenesis; it is involved in the regulation of endochondral skeleton formation, and the development of retinal pigment epithelium (RPE), photoreceptors and periocular tissues. The C-terminal part of the indian hedgehog protein precursor displays an autoproteolysis and a cholesterol transferase activity. Both activities result in the cleavage of the full-length protein into two parts followed by the covalent attachment of a cholesterol moiety to the C-terminal of the newly generated N-product. Both activities occur in the endoplasmic reticulum. Functionally, the dually lipidated indian hedgehog protein N-product is a morphogen which is essential for a variety of patterning events during development. Binds to the patched (PTCH1) receptor, which functions in association with smoothened (SMO), to activate the transcription of target genes. Plays a role in morphogenesis of the skeleton by coordinating growth and differentiation of the endochondral skeleton. Positively regulates PTHLH expression during endochondral bone formation preventing chondrocyte hypertrophy. In contrast, participates in normal chondrocyte proliferation in a PTHLH-independent pathway. In Gallus gallus (Chicken), this protein is Indian hedgehog protein.